Consider the following 229-residue polypeptide: GTP-binding protein Di-Ras3 (229 aa).

GTP is bound by residues 44 to 51, 63 to 69, 91 to 95, 152 to 155, and 182 to 183; these read GTAGVGKS, RHEYLPT, DSKSG, NKSD, and AK. The Effector region motif lies at 66–74; the sequence is YLPTIENTY. Cys226 is subject to Cysteine methyl ester. The S-geranylgeranyl cysteine moiety is linked to residue Cys226. Positions 227–229 are cleaved as a propeptide — removed in mature form; the sequence is IIM.

This sequence belongs to the small GTPase superfamily. Di-Ras family. As to expression, expressed in normal ovarian and breast epithelial cells but not in ovarian and breast cancers.

The protein resides in the cell membrane. The chain is GTP-binding protein Di-Ras3 (DIRAS3) from Homo sapiens (Human).